The chain runs to 107 residues: Universal stress protein B homolog (107 aa).

The next 2 helical transmembrane spans lie at 6-23 and 89-106; these read TILF…ARYF and LFIL…SSFI.

It belongs to the universal stress protein B family.

Its subcellular location is the cell inner membrane. The sequence is that of Universal stress protein B homolog from Vibrio atlanticus (strain LGP32) (Vibrio splendidus (strain Mel32)).